Consider the following 590-residue polypeptide: Beta-fructofuranosidase, insoluble isoenzyme 4 (590 aa).

Residues 1–28 (MVMAPIPQPWHQWPFLILFFLVLFSCES) form the signal peptide. Substrate contacts are provided by residues 71–74 (WIND) and glutamine 90. Aspartate 74 is an active-site residue. N-linked (GlcNAc...) asparagine glycosylation is present at asparagine 94. Residues tryptophan 98 and 133 to 134 (WT) each bind substrate. An N-linked (GlcNAc...) asparagine glycan is attached at asparagine 167. 198-199 (RD) contributes to the substrate binding site. N-linked (GlcNAc...) asparagine glycosylation occurs at asparagine 247. Residues glutamate 253 and aspartate 287 each coordinate substrate. A glycan (N-linked (GlcNAc...) asparagine) is linked at asparagine 345. A disulfide bridge connects residues cysteine 445 and cysteine 491. Asparagine 565 carries an N-linked (GlcNAc...) asparagine glycan.

This sequence belongs to the glycosyl hydrolase 32 family. Expressed in leaves. Expressed at moderate levels in roots and flowers, and weakly in seeds.

Its subcellular location is the secreted. The protein resides in the extracellular space. It localises to the apoplast. The protein localises to the cell wall. The enzyme catalyses Hydrolysis of terminal non-reducing beta-D-fructofuranoside residues in beta-D-fructofuranosides.. Its function is as follows. May play a role in sucrose partitioning during seed development and in stress response. The chain is Beta-fructofuranosidase, insoluble isoenzyme 4 (CIN4) from Oryza sativa subsp. japonica (Rice).